The following is a 444-amino-acid chain: Phosphoribosylamine--glycine ligase (444 aa).

Positions 109–324 (RNLFKKYEID…FLDVCFAIAE (216 aa)) constitute an ATP-grasp domain. 140-202 (MTSLGKDVVV…EEKLVGVEFT (63 aa)) is an ATP binding site. Mg(2+) is bound by residues Gln-282, Glu-294, and Asn-296. Positions 282, 294, and 296 each coordinate Mn(2+).

The protein belongs to the GARS family. Requires Mg(2+) as cofactor. Mn(2+) is required as a cofactor.

The catalysed reaction is 5-phospho-beta-D-ribosylamine + glycine + ATP = N(1)-(5-phospho-beta-D-ribosyl)glycinamide + ADP + phosphate + H(+). The protein operates within purine metabolism; IMP biosynthesis via de novo pathway; N(1)-(5-phospho-D-ribosyl)glycinamide from 5-phospho-alpha-D-ribose 1-diphosphate: step 2/2. The polypeptide is Phosphoribosylamine--glycine ligase (Methanococcus maripaludis (strain C5 / ATCC BAA-1333)).